The chain runs to 501 residues: Acetyl-coenzyme A carboxylase carboxyl transferase subunit beta, chloroplastic (501 aa).

Positions 231 to 501 (LWIECENCYG…LIQNEKESRS (271 aa)) constitute a CoA carboxyltransferase N-terminal domain. The Zn(2+) site is built by Cys-235, Cys-238, Cys-254, and Cys-257. A C4-type zinc finger spans residues 235–257 (CENCYGLNYKKILKSKMNICEHC).

Belongs to the AccD/PCCB family. In terms of assembly, acetyl-CoA carboxylase is a heterohexamer composed of biotin carboxyl carrier protein, biotin carboxylase and 2 subunits each of ACCase subunit alpha and ACCase plastid-coded subunit beta (accD). Requires Zn(2+) as cofactor.

It is found in the plastid. The protein localises to the chloroplast stroma. The enzyme catalyses N(6)-carboxybiotinyl-L-lysyl-[protein] + acetyl-CoA = N(6)-biotinyl-L-lysyl-[protein] + malonyl-CoA. It functions in the pathway lipid metabolism; malonyl-CoA biosynthesis; malonyl-CoA from acetyl-CoA: step 1/1. Its function is as follows. Component of the acetyl coenzyme A carboxylase (ACC) complex. Biotin carboxylase (BC) catalyzes the carboxylation of biotin on its carrier protein (BCCP) and then the CO(2) group is transferred by the transcarboxylase to acetyl-CoA to form malonyl-CoA. This is Acetyl-coenzyme A carboxylase carboxyl transferase subunit beta, chloroplastic from Lotus japonicus (Lotus corniculatus var. japonicus).